We begin with the raw amino-acid sequence, 185 residues long: Potassium-transporting ATPase KdpC subunit 2 (185 aa).

A helical transmembrane segment spans residues 8-28 (LGLVLIMFVLCGFIFPLTVTA).

The protein belongs to the KdpC family. The system is composed of three essential subunits: KdpA, KdpB and KdpC.

It localises to the cell membrane. The protein localises to the membrane raft. In terms of biological role, part of the high-affinity ATP-driven potassium transport (or Kdp) system, which catalyzes the hydrolysis of ATP coupled with the electrogenic transport of potassium into the cytoplasm. This subunit acts as a catalytic chaperone that increases the ATP-binding affinity of the ATP-hydrolyzing subunit KdpB by the formation of a transient KdpB/KdpC/ATP ternary complex. In Staphylococcus aureus (strain Mu50 / ATCC 700699), this protein is Potassium-transporting ATPase KdpC subunit 2.